We begin with the raw amino-acid sequence, 67 residues long: UPF0253 protein VV2574 (67 aa).

The protein belongs to the UPF0253 family.

This is UPF0253 protein VV2574 from Vibrio vulnificus (strain YJ016).